The chain runs to 498 residues: MTSKIAQNLKQPALDFLSFVNASPTPFHAVQSAKELLSKAGFQEIKEKDSWSSTCRPGGKYYLTRNSSTIVAFAIGKKWKPGNPISMIGAHTDSPVLRIKPVSNKRGEGFVQVGVETYGGGIWHTWFDRDLGVAGRAMVRTGDGSIVQKLVKIDRPILRIPTLAIHLDRQETFAFNKETQLFPIAGLVAAELNRTADSTATGEKTAANNETEKGDFAPLKSVTERHHPYLVELIAAEAGVKPDDILDFEMILFDTQKSCLGGLLEEFVFSPRLDNLNSSFCATVGLIDSVADASALDDEPSIRLIALFDHEEIGSRTAQGADSNVLPAIIRRLSVLPSSTSGNEDLATAFEETLSTSFLLSADMAHAVHPNYAAKYENDHRPEINKGPVIKINANARYATNSPGIVLLQEVARKAAEDGGEGVPLQLFVVRNDSSCGSTIGPMLSAALGARTLDLGNPQLSMHSIRETGGTYDVGHSIRLFTSFFKHYSNTSKTIFVD.

H91 is a Zn(2+) binding site. H166 is a substrate binding site. Zn(2+) is bound at residue D274. A substrate-binding site is contributed by E311. Positions 312 and 363 each coordinate Zn(2+). 4 residues coordinate substrate: D363, H366, K391, and Y398. H463 contacts Zn(2+).

Belongs to the peptidase M18 family. Tetrahedron-shaped homododecamer built from six homodimers. It depends on Zn(2+) as a cofactor. The N-terminus is blocked.

The enzyme catalyses Release of an N-terminal aspartate or glutamate from a peptide, with a preference for aspartate.. Its activity is regulated as follows. Inhibited by zinc. Stimulated by calcium and bacitracin. In Aspergillus oryzae (strain ATCC 42149 / RIB 40) (Yellow koji mold), this protein is Aspartyl aminopeptidase (dapA).